Reading from the N-terminus, the 454-residue chain is Signal recognition particle protein (454 aa).

Residues 102–109 (GLQGTGKT), 184–188 (DTAGR), and 242–245 (TKMD) each bind GTP.

This sequence belongs to the GTP-binding SRP family. SRP54 subfamily. Part of the signal recognition particle protein translocation system, which is composed of SRP and FtsY.

The protein resides in the cytoplasm. It carries out the reaction GTP + H2O = GDP + phosphate + H(+). In terms of biological role, involved in targeting and insertion of nascent membrane proteins into the cytoplasmic membrane. Binds to the hydrophobic signal sequence of the ribosome-nascent chain (RNC) as it emerges from the ribosomes. The SRP-RNC complex is then targeted to the cytoplasmic membrane where it interacts with the SRP receptor FtsY. This is Signal recognition particle protein from Aquifex aeolicus (strain VF5).